Consider the following 1919-residue polypeptide: MAESNGKGSHNETSSDDDDEYEDNSRGFNLGFIFGNVDNSGDLDADYLDEDAKEHLSALADKLGSSLPDINLLAKSERTASDPAEQDYDRKAEDAVDYEDIDEEYDGPEVQVVSEEDHLLPKKEYFSTAVALGSLKSRASVFDDEDYDEEEEQEEEQAPVEKSLETEKREPVVLKEDKALEYEEEASILDKEDHMDTEDVQEEEVDELLEGTLDDKGATPLPTLYVEDGMVILQFSEIFAIHEPPQKRDRRENRYVTCRDKYKSMDISELVEDDEEVLLKSHGRIDTHVEQADLIQLDVPFPIREGLQLVKASTIGGITPESREFTKLGRDSCIMGELLKQDFIDDNSSLCQSQLSMQVFPLDQHEWERRIIWEHSPEISGNSGEIFEPGLEPEGMLVKGTNSETEQESLNVVNSRVQVQADNNMFVPFSANLLESFGSRGSQSTNESTNKSRHHPQLLRLESQWDENHLSGNDEAGVKKIKRLEKDALGRFSRLVLRERDLGDEAWLDSIIWDSEKELSRSKLIFDLQDEQMVFEIFDNEESKNLQLHAGAMIVSRSSKSKDETFQEGCESNSGWQFNLSNDKFYMNGKSSQQLQANTNKSSVHSLRVFHSVPAIKLQTMKSKLSNKDIANFHRPKALWYPHDNELAIKQQGKLPTRGSMKIIVKSLGGKGSKLHVGIEESVSSLRAKASRKLDFKETEAVKMFYKGKELDDEKSLAAQNVQPNSLVHLIRTKVHLWPWAQKLPGENKSLRPPGAFKKKSDLSTKDGHVFLMEYCEERPLMLSNAGMGANLCTYYQKSSPEDQRGNLLRNQSDTLGNVMILEPGDKSPFLGEIHAGCSQSSVETNMYKAPIFPQRLQSTDYLLVRSPKGKLSLRRIDKIVVVGQQEPRMEVMSPGSKNLQTYLVNRMLVYVYREFFKRGGGEHPIAADELSFLFSNLTDAIIKKNMKIIACWKRDKNGQSYWTKKDSLLEPPESELKKLVAPEHVCSYESMLAGLYRLKHLGITRFTLPASISNALAQLPDEAIALAAASHIERELQITPWNLSSNFVACTNQDRANIERLEITGVGDPSGRGLGFSYVRAAPKAPAAAGHMKKKAAAGRGAPTVTGTDADLRRLSMEAAREVLIKFNVPDEIIAKQTRWHRIAMIRKLSSEQAASGVKVDPTTIGKYARGQRMSFLQMQQQAREKCQEIWDRQLLSLSAFDGDENESENEANSDLDSFAGDLENLLDAEEGGEGEESNISKNDKLDGVKGLKMRRRPSQVETDEEIEDEATEYAELCRLLMQDEDQKKKKKKMKGVGEGMGSYPPPRPNIALQSGEPVRKANAMDKKPIAIQPDASFLVNESTIKDNRNVDSIIKTPKGKQVKENSNSLGQLKKVKILNENLKVFKEKKSARENFVCGACGQHGHMRTNKHCPRYRENTESQPEGIDMDKSAGKPSSSEPSGLPKLKPIKNSKAAPKSAMKTSVDEALKGDKLSSKTGGLPLKFRYGIPAGDLSDKPVSEAPGSSEQAVVSDIDTGIKSTSKISKLKISSKAKPKESKGESERRSHSLMPTFSRERGESESHKPSVSGQPLSSTERNQAASSRHTISIPRPSLSMDTDQAESRRPHLVIRPPTEREQPQKKLVIKRSKEMNDHDMSSLEESPRFESRKTKRMAELAGFQRQQSFRLSENSLERRPKEDRVWWEEEEISTGRHREVRARRDYDDMSVSEEPNEIAEIRRYEEVIRSEREEEERQKAKKKKKKKKLQPEIVEGYLEDYPPRKNDRRLSERGRNVRSRYVSDFERDGAEYAPQPKRRKKGEVGLANILERIVDTLRLKEEVSRLFLKPVSKKEAPDYLDIVENPMDLSTIRDKVRKIEYRNREQFRHDVWQIKYNAHLYNDGRNPGIPPLADQLLEICDYLLDDYEDQLKEAEKGIDPND.

Disordered stretches follow at residues Met1–Ser25 and Asp143–Arg169. Over residues Asp143–Ala158 the composition is skewed to acidic residues. One can recognise a Ubiquitin-like domain in the interval Met661–Leu737. Disordered stretches follow at residues Asp1287–Leu1314, Met1408–Glu1679, and Arg1726–Leu1746. 3 stretches are compositionally biased toward basic and acidic residues: residues Ser1465 to Ser1476, Lys1535 to Ser1547, and Ser1555 to Lys1565. Residues Pro1566–Thr1587 are compositionally biased toward polar residues. The segment covering Arg1628–Ala1655 has biased composition (basic and acidic residues). Over residues Gln1661–Asn1671 the composition is skewed to polar residues. Positions Asn1713 to Ile1750 form a coiled coil. Positions Arg1726–Gln1735 are enriched in basic and acidic residues. Over residues Lys1736–Lys1745 the composition is skewed to basic residues. Residues Lys1794–Ala1911 enclose the Bromo domain.

The protein belongs to the TAF1 family. As to quaternary structure, component of the TFIID complex. TFIID is composed of TATA binding protein (TBP) and a number of TBP-associated factors (TAFs) whose MWs range from 14-217 kDa. Interacts with TAF7 and TAF14B, and (via N-terminus) with TBP1 and TBP2. In terms of tissue distribution, expressed in roots, leaves and inflorescences.

It localises to the nucleus. In terms of biological role, TAFs are components of the transcription factor IID (TFIID) complex that is essential for mediating regulation of RNA polymerase transcription. Core scaffold of the TFIID complex. The protein is Transcription initiation factor TFIID subunit 1 (TAF1) of Arabidopsis thaliana (Mouse-ear cress).